A 503-amino-acid chain; its full sequence is uncharacterized protein (503 aa).

This sequence belongs to the Mg-chelatase subunits D/I family. ComM subfamily.

This is an uncharacterized protein from Mycobacterium tuberculosis (strain CDC 1551 / Oshkosh).